We begin with the raw amino-acid sequence, 206 residues long: uncharacterized protein (206 aa).

Positions 1–18 (MSSLVLIPCALLTQGIYA) are cleaved as a signal peptide.

This is an uncharacterized protein from Acanthamoeba polyphaga mimivirus (APMV).